Reading from the N-terminus, the 290-residue chain is MAEDKTKRLGRWYFGGVAGAMAACCTHPLDLLKVQLQTQQQGKLTIGQLSLKIYKNDGILAFYNGVSASVLRQLTYSTTRFGIYETVKKQLPQDQPLPFYQKALLAGFAGACGGMVGTPGDLVNVRMQNDSKLPLEQRRNYKHALDGLVRITREEGFMKMFNGATMATSRAILMTIGQLSFYDQIKQTLISSGVAEDNLQTHFASSISAASVATVMTQPLDVMKTRMMNAAPGEFKGILDCFMFTAKLGPMGFFKGFIPAWARLAPHTVLTFIFFEQLRLKFGYAPPVKA.

Solcar repeat units lie at residues 6-90 (TKRL…VKKQ), 101-188 (QKAL…IKQT), and 197-281 (DNLQ…LRLK). A run of 3 helical transmembrane segments spans residues 12 to 32 (WYFG…LDLL), 65 to 84 (GVSA…FGIY), and 103 to 123 (ALLA…GDLV). An N6-acetyllysine modification is found at K159. Helical transmembrane passes span 163–182 (GATM…LSFY), 203–223 (FASS…LDVM), and 256–276 (GFIP…IFFE).

The protein belongs to the mitochondrial carrier (TC 2.A.29) family.

Its subcellular location is the mitochondrion inner membrane. It catalyses the reaction (S)-malate(in) + phosphate(out) = (S)-malate(out) + phosphate(in). The catalysed reaction is malonate(out) + (S)-malate(in) = malonate(in) + (S)-malate(out). It carries out the reaction (S)-malate(in) + succinate(out) = (S)-malate(out) + succinate(in). The enzyme catalyses (S)-malate(in) + sulfate(out) = (S)-malate(out) + sulfate(in). It catalyses the reaction 2 thiosulfate(out) + (S)-malate(in) = 2 thiosulfate(in) + (S)-malate(out). The catalysed reaction is malonate(out) + phosphate(in) = malonate(in) + phosphate(out). It carries out the reaction succinate(out) + phosphate(in) = succinate(in) + phosphate(out). The enzyme catalyses sulfate(out) + phosphate(in) = sulfate(in) + phosphate(out). It catalyses the reaction 2 thiosulfate(out) + phosphate(in) = 2 thiosulfate(in) + phosphate(out). The catalysed reaction is malonate(out) + succinate(in) = malonate(in) + succinate(out). In terms of biological role, catalyzes the electroneutral exchange or flux of physiologically important metabolites such as dicarboxylates (malonate, malate, succinate), inorganic sulfur-containing anions, and phosphate, across mitochondrial inner membrane. Plays an important role in gluconeogenesis, fatty acid metabolism, urea synthesis, and sulfur metabolism, by supplying the substrates for the different metabolic processes. This chain is Mitochondrial dicarboxylate carrier, found in Caenorhabditis elegans.